The following is a 179-amino-acid chain: Large ribosomal subunit protein uL5 (179 aa).

This sequence belongs to the universal ribosomal protein uL5 family. As to quaternary structure, part of the 50S ribosomal subunit; part of the 5S rRNA/L5/L18/L25 subcomplex. Contacts the 5S rRNA and the P site tRNA. Forms a bridge to the 30S subunit in the 70S ribosome.

This is one of the proteins that bind and probably mediate the attachment of the 5S RNA into the large ribosomal subunit, where it forms part of the central protuberance. In the 70S ribosome it contacts protein S13 of the 30S subunit (bridge B1b), connecting the 2 subunits; this bridge is implicated in subunit movement. Contacts the P site tRNA; the 5S rRNA and some of its associated proteins might help stabilize positioning of ribosome-bound tRNAs. The sequence is that of Large ribosomal subunit protein uL5 from Delftia acidovorans (strain DSM 14801 / SPH-1).